Consider the following 254-residue polypeptide: Dihydroanticapsin 7-dehydrogenase (254 aa).

Residue 9 to 31 participates in NAD(+) binding; the sequence is LITGGASGIGYAAVQAFLNQQAN. Substrate is bound at residue Ser-139. The Proton acceptor role is filled by Tyr-152.

The protein belongs to the short-chain dehydrogenases/reductases (SDR) family.

The enzyme catalyses L-dihydroanticapsin + NAD(+) = L-anticapsin + NADH + H(+). It functions in the pathway antibiotic biosynthesis; bacilysin biosynthesis. Part of the bacABCDEFG operon responsible for the biosynthesis of bacilysin, an irreversible inactivator of the glutaminase domain of glucosamine synthetase. Catalyzes the dehydrogenation of the C7-hydroxyl group in the 4S-tetrahydrotyrosine (4S-H4Tyr) to yield anticapsin (epoxycyclohexanonyl-Ala). The sequence is that of Dihydroanticapsin 7-dehydrogenase from Bacillus amyloliquefaciens (Bacillus velezensis).